Here is a 477-residue protein sequence, read N- to C-terminus: Bifunctional protein HldE (477 aa).

The tract at residues 1–318 (MKVTLPEFER…ENAVRGRADT (318 aa)) is ribokinase. Lys179 is modified (N6-acetyllysine). ATP is bound at residue 195–198 (NLSE). Asp264 is an active-site residue. The cytidylyltransferase stretch occupies residues 344–477 (MTNGVFDILH…IKKIQQDKKG (134 aa)).

The protein in the N-terminal section; belongs to the carbohydrate kinase PfkB family. In the C-terminal section; belongs to the cytidylyltransferase family. As to quaternary structure, homodimer.

The catalysed reaction is D-glycero-beta-D-manno-heptose 7-phosphate + ATP = D-glycero-beta-D-manno-heptose 1,7-bisphosphate + ADP + H(+). The enzyme catalyses D-glycero-beta-D-manno-heptose 1-phosphate + ATP + H(+) = ADP-D-glycero-beta-D-manno-heptose + diphosphate. It functions in the pathway nucleotide-sugar biosynthesis; ADP-L-glycero-beta-D-manno-heptose biosynthesis; ADP-L-glycero-beta-D-manno-heptose from D-glycero-beta-D-manno-heptose 7-phosphate: step 1/4. The protein operates within nucleotide-sugar biosynthesis; ADP-L-glycero-beta-D-manno-heptose biosynthesis; ADP-L-glycero-beta-D-manno-heptose from D-glycero-beta-D-manno-heptose 7-phosphate: step 3/4. In terms of biological role, catalyzes the phosphorylation of D-glycero-D-manno-heptose 7-phosphate at the C-1 position to selectively form D-glycero-beta-D-manno-heptose-1,7-bisphosphate. Catalyzes the ADP transfer from ATP to D-glycero-beta-D-manno-heptose 1-phosphate, yielding ADP-D-glycero-beta-D-manno-heptose. This is Bifunctional protein HldE from Escherichia coli O17:K52:H18 (strain UMN026 / ExPEC).